Reading from the N-terminus, the 150-residue chain is Ubiquitin-conjugating enzyme E2 3 (150 aa).

The 147-residue stretch at 4–150 folds into the UBC core domain; that stretch reads PAKKRLMWDF…VIEIVEQSYV (147 aa). C88 serves as the catalytic Glycyl thioester intermediate.

It belongs to the ubiquitin-conjugating enzyme family. As to expression, expressed in all tissues examined. Lower levels found in leaves.

It carries out the reaction S-ubiquitinyl-[E1 ubiquitin-activating enzyme]-L-cysteine + [E2 ubiquitin-conjugating enzyme]-L-cysteine = [E1 ubiquitin-activating enzyme]-L-cysteine + S-ubiquitinyl-[E2 ubiquitin-conjugating enzyme]-L-cysteine.. The protein operates within protein modification; protein ubiquitination. In terms of biological role, accepts the ubiquitin from the E1 complex and catalyzes its covalent attachment to other proteins. This is Ubiquitin-conjugating enzyme E2 3 (UBC3) from Arabidopsis thaliana (Mouse-ear cress).